Consider the following 365-residue polypeptide: Chorismate synthase (365 aa).

Positions 48 and 54 each coordinate NADP(+). Residues 125 to 127, 237 to 238, Gly277, 292 to 296, and Arg318 contribute to the FMN site; these read RSS, NA, and KPTSS.

This sequence belongs to the chorismate synthase family. Homotetramer. FMNH2 serves as cofactor.

It catalyses the reaction 5-O-(1-carboxyvinyl)-3-phosphoshikimate = chorismate + phosphate. The protein operates within metabolic intermediate biosynthesis; chorismate biosynthesis; chorismate from D-erythrose 4-phosphate and phosphoenolpyruvate: step 7/7. Its function is as follows. Catalyzes the anti-1,4-elimination of the C-3 phosphate and the C-6 proR hydrogen from 5-enolpyruvylshikimate-3-phosphate (EPSP) to yield chorismate, which is the branch point compound that serves as the starting substrate for the three terminal pathways of aromatic amino acid biosynthesis. This reaction introduces a second double bond into the aromatic ring system. The polypeptide is Chorismate synthase (Paracidovorax citrulli (strain AAC00-1) (Acidovorax citrulli)).